Reading from the N-terminus, the 261-residue chain is High-affinity zinc uptake system membrane protein ZnuB (261 aa).

At 1–7 (MIELLFP) the chain is on the periplasmic side. The chain crosses the membrane as a helical span at residues 8–28 (GWLAGIMLACAAGPLGSFVVW). Residues 29-53 (RRMSYFGDTLAHASLLGVAFGLLLD) lie on the Cytoplasmic side of the membrane. A helical membrane pass occupies residues 54–74 (VNPFYAVIAVTLLLAGGLVWL). Residues 75 to 83 (EKRPQLAID) are Periplasmic-facing. Residues 84–104 (TLLGIMAHSALSLGLVVVSLM) traverse the membrane as a helical segment. Over 105–121 (SNIRVDLMAYLFGDLLA) the chain is Cytoplasmic. A helical membrane pass occupies residues 122-142 (VTPEDLISIAIGVVIVVAILF). Residues 143–177 (WQWRNLLSMTISPDLAFVDGVKLQRVKLLLMLVTA) lie on the Periplasmic side of the membrane. The chain crosses the membrane as a helical span at residues 178–198 (LTIGVAMKFVGALIITSLLII). Topologically, residues 199 to 213 (PAATARRFARTPEQM) are cytoplasmic. A helical membrane pass occupies residues 214-234 (AGVAVLVGMVAVTGGLTFSAV). A topological domain (periplasmic) is located at residue Tyr-235. Residues 236–256 (DTPAGPSVVLCAALLFILSMM) form a helical membrane-spanning segment. At 257–261 (KKQAS) the chain is on the cytoplasmic side.

Belongs to the ABC-3 integral membrane protein family.

The protein resides in the cell inner membrane. Its function is as follows. Involved in the high-affinity zinc uptake transport system. The protein is High-affinity zinc uptake system membrane protein ZnuB (znuB) of Escherichia coli (strain K12).